The chain runs to 233 residues: Glucosamine-6-phosphate deaminase (233 aa).

Catalysis depends on aspartate 62, which acts as the Proton acceptor; for enolization step. Asparagine 128 serves as the catalytic For ring-opening step. The Proton acceptor; for ring-opening step role is filled by histidine 130. The active-site For ring-opening step is glutamate 135.

It belongs to the glucosamine/galactosamine-6-phosphate isomerase family. NagB subfamily.

The catalysed reaction is alpha-D-glucosamine 6-phosphate + H2O = beta-D-fructose 6-phosphate + NH4(+). The protein operates within amino-sugar metabolism; N-acetylneuraminate degradation; D-fructose 6-phosphate from N-acetylneuraminate: step 5/5. Its function is as follows. Catalyzes the reversible isomerization-deamination of glucosamine 6-phosphate (GlcN6P) to form fructose 6-phosphate (Fru6P) and ammonium ion. The sequence is that of Glucosamine-6-phosphate deaminase from Enterococcus faecalis (strain ATCC 700802 / V583).